A 37-amino-acid polypeptide reads, in one-letter code: Large ribosomal subunit protein bL36 (37 aa).

Belongs to the bacterial ribosomal protein bL36 family.

This chain is Large ribosomal subunit protein bL36, found in Dehalococcoides mccartyi (strain ATCC BAA-2266 / KCTC 15142 / 195) (Dehalococcoides ethenogenes (strain 195)).